The chain runs to 255 residues: Aliphatic sulfonates import ATP-binding protein SsuB (255 aa).

Residues 12-233 form the ABC transporter domain; that stretch reads LLLNAVSKHY…RLGSVRLAEL (222 aa). 44-51 provides a ligand contact to ATP; that stretch reads GRSGGGKS.

Belongs to the ABC transporter superfamily. Aliphatic sulfonates importer (TC 3.A.1.17.2) family. In terms of assembly, the complex is composed of two ATP-binding proteins (SsuB), two transmembrane proteins (SsuC) and a solute-binding protein (SsuA).

The protein localises to the cell inner membrane. The enzyme catalyses ATP + H2O + aliphatic sulfonate-[sulfonate-binding protein]Side 1 = ADP + phosphate + aliphatic sulfonateSide 2 + [sulfonate-binding protein]Side 1.. Part of the ABC transporter complex SsuABC involved in aliphatic sulfonates import. Responsible for energy coupling to the transport system. In Shigella flexneri, this protein is Aliphatic sulfonates import ATP-binding protein SsuB.